Here is a 266-residue protein sequence, read N- to C-terminus: Undecaprenyl-diphosphatase 1 (266 aa).

The next 8 helical transmembrane spans lie at 1-21 (MDTF…FLPI), 39-59 (QGLS…VIYF), 87-107 (WWII…KDFI), 114-134 (TGVI…ADKM), 149-169 (ALLI…RSGA), 183-203 (AAAR…AILV), 218-238 (ALTL…HYFL), and 246-266 (MTPF…FIFL).

This sequence belongs to the UppP family.

The protein resides in the cell inner membrane. It catalyses the reaction di-trans,octa-cis-undecaprenyl diphosphate + H2O = di-trans,octa-cis-undecaprenyl phosphate + phosphate + H(+). Catalyzes the dephosphorylation of undecaprenyl diphosphate (UPP). Confers resistance to bacitracin. The chain is Undecaprenyl-diphosphatase 1 from Shewanella oneidensis (strain ATCC 700550 / JCM 31522 / CIP 106686 / LMG 19005 / NCIMB 14063 / MR-1).